The sequence spans 207 residues: Phosphoserine phosphatase (207 aa).

Aspartate 8 acts as the Nucleophile in catalysis. Mg(2+) contacts are provided by aspartate 8 and aspartate 10. The Proton donor role is filled by aspartate 10. Substrate-binding positions include glutamate 17, arginine 53, 96–97 (SG), and lysine 141. Residue aspartate 164 participates in Mg(2+) binding. Asparagine 167 contacts substrate.

Belongs to the HAD-like hydrolase superfamily. SerB family. It depends on Mg(2+) as a cofactor.

It carries out the reaction O-phospho-L-serine + H2O = L-serine + phosphate. It catalyses the reaction O-phospho-D-serine + H2O = D-serine + phosphate. It functions in the pathway amino-acid biosynthesis; L-serine biosynthesis; L-serine from 3-phospho-D-glycerate: step 3/3. The sequence is that of Phosphoserine phosphatase from Campylobacter jejuni subsp. doylei (strain ATCC BAA-1458 / RM4099 / 269.97).